The primary structure comprises 256 residues: Putative transcription factor 001R (256 aa).

Its function is as follows. Transcription activation. The chain is Putative transcription factor 001R from Frog virus 3 (isolate Goorha) (FV-3).